An 80-amino-acid chain; its full sequence is Exodeoxyribonuclease 7 small subunit (80 aa).

The protein belongs to the XseB family. In terms of assembly, heterooligomer composed of large and small subunits.

The protein resides in the cytoplasm. It carries out the reaction Exonucleolytic cleavage in either 5'- to 3'- or 3'- to 5'-direction to yield nucleoside 5'-phosphates.. Bidirectionally degrades single-stranded DNA into large acid-insoluble oligonucleotides, which are then degraded further into small acid-soluble oligonucleotides. The protein is Exodeoxyribonuclease 7 small subunit of Rickettsia bellii (strain OSU 85-389).